A 319-amino-acid chain; its full sequence is Glycine--tRNA ligase alpha subunit (319 aa).

Residues 290–319 (RQQQPEAPAPGPAAVVGGRDRKDACDVKEG) form a disordered region. Positions 307–319 (GRDRKDACDVKEG) are enriched in basic and acidic residues.

It belongs to the class-II aminoacyl-tRNA synthetase family. In terms of assembly, tetramer of two alpha and two beta subunits.

The protein resides in the cytoplasm. The enzyme catalyses tRNA(Gly) + glycine + ATP = glycyl-tRNA(Gly) + AMP + diphosphate. The protein is Glycine--tRNA ligase alpha subunit of Moorella thermoacetica (strain ATCC 39073 / JCM 9320).